The following is an 861-amino-acid chain: Protein HIR1 (861 aa).

7 WD repeats span residues 14–54, 74–113, 132–171, 174–213, 227–270, 295–337, and 341–382; these read EHKS…KFAS, RHAG…TQPM, AHDN…KVKR, VHQS…ETSF, PLTT…SPVS, STTD…PLIV, and ICGK…EAIP. The tract at residues 450–471 is disordered; that stretch reads KRAQLTGTGNHTDNNTTSKAEP. Over residues 455 to 466 the composition is skewed to low complexity; the sequence is TGTGNHTDNNTT.

The protein belongs to the WD repeat HIR1 family.

It localises to the nucleus. Required for replication-independent chromatin assembly and for the periodic repression of histone gene transcription during the cell cycle. The chain is Protein HIR1 (HIR1) from Kluyveromyces lactis (strain ATCC 8585 / CBS 2359 / DSM 70799 / NBRC 1267 / NRRL Y-1140 / WM37) (Yeast).